The primary structure comprises 1379 residues: Vascular endothelial growth factor receptor 3 (1379 aa).

The signal sequence occupies residues 1-19; the sequence is MKRVCTLPLWLWLGIVSEA. Over 20–788 the chain is Extracellular; sequence DLVSSYSMTP…EGSDDKTNVE (769 aa). Ig-like C2-type domains are found at residues 30-136, 160-222, 240-335, 340-421, 430-566, 569-684, and 691-777; these read PTLS…TAVS, KENT…IDNK, DIQL…TDVI, PFIN…KRIS, PRIH…FYVT, PDGF…KYIS, and PRLK…ASVS. Cystine bridges form between cysteine 51-cysteine 120 and cysteine 167-cysteine 215. Residues 73–93 form a disordered region; the sequence is RRWNSQPQQRPVGAGNPEEDC. N-linked (GlcNAc...) asparagine glycosylation is found at asparagine 113, asparagine 175, asparagine 260, and asparagine 308. Cysteine 261 and cysteine 319 are disulfide-bonded. Disulfide bonds link cysteine 453-cysteine 548, cysteine 474-cysteine 500, and cysteine 592-cysteine 666. N-linked (GlcNAc...) asparagine glycosylation is found at asparagine 529, asparagine 541, asparagine 596, asparagine 608, asparagine 655, asparagine 696, and asparagine 703. Cysteine 712 and cysteine 761 are joined by a disulfide. N-linked (GlcNAc...) asparagine glycosylation is present at asparagine 771. A helical membrane pass occupies residues 789-809; the sequence is IVILIGTGVIAVFFWILLIII. The Cytoplasmic portion of the chain corresponds to 810-1379; the sequence is FCNIKRPAHA…LHASFFSEQY (570 aa). A Protein kinase domain is found at 858–1185; it reads LRLGKVLGHG…DLVEILGNLL (328 aa). ATP contacts are provided by residues 864–872 and lysine 892; that span reads LGHGAFGKV. The Proton acceptor role is filled by aspartate 1049. A phosphotyrosine; by autocatalysis mark is found at tyrosine 1075 and tyrosine 1080. Residues 1196–1224 are disordered; that stretch reads YIPLNDSHSSEDDGFSQVPSSAQQNSDEE. A phosphotyrosine; by autocatalysis mark is found at tyrosine 1239, tyrosine 1240, tyrosine 1274, tyrosine 1342, and tyrosine 1346. The disordered stretch occupies residues 1299 to 1379; sequence RHRKEGGFSS…LHASFFSEQY (81 aa). A compositionally biased stretch (polar residues) spans 1332-1343; it reads YGSQVGGQTFYN.

Belongs to the protein kinase superfamily. Tyr protein kinase family. CSF-1/PDGF receptor subfamily. In terms of assembly, interacts with VEGFC and VEGFD. Monomer in the absence of bound VEGFC or VEGFD. Homodimer in the presence of bound VEGFC or VEGFD. Autophosphorylated on tyrosine residues upon ligand binding. Autophosphorylation occurs in trans, i.e. one subunit of the dimeric receptor phosphorylates tyrosine residues on the other subunit.

The protein resides in the cell membrane. The protein localises to the cytoplasm. It localises to the nucleus. The enzyme catalyses L-tyrosyl-[protein] + ATP = O-phospho-L-tyrosyl-[protein] + ADP + H(+). Present in an inactive conformation in the absence of bound ligand. Binding of VEGFC or VEGFD leads to dimerization and activation by autophosphorylation on tyrosine residues. Tyrosine-protein kinase that acts as a cell-surface receptor for VEGFC and VEGFD, and plays an essential role in lymphangiogenesis and in the development of the vascular network and the cardiovascular system during embryonic development. Promotes proliferation, survival and migration of endothelial cells, and regulates angiogenic sprouting. Mediates activation of the MAPK1/ERK2, MAPK3/ERK1 signaling pathway, of MAPK8 and the JUN signaling pathway, and of the AKT1 signaling pathway. The chain is Vascular endothelial growth factor receptor 3 (FLT4) from Coturnix coturnix (Common quail).